The primary structure comprises 449 residues: Chromosomal replication initiator protein DnaA (449 aa).

Positions Met1–Val72 are domain I, interacts with DnaA modulators. The interval Val72–Asn111 is domain II. The segment at Met112–Ser328 is domain III, AAA+ region. 4 residues coordinate ATP: Gly156, Gly158, Lys159, and Thr160. The tract at residues Ser329–Ser449 is domain IV, binds dsDNA.

The protein belongs to the DnaA family. In terms of assembly, oligomerizes as a right-handed, spiral filament on DNA at oriC.

It localises to the cytoplasm. Plays an essential role in the initiation and regulation of chromosomal replication. ATP-DnaA binds to the origin of replication (oriC) to initiate formation of the DNA replication initiation complex once per cell cycle. Binds the DnaA box (a 9 base pair repeat at the origin) and separates the double-stranded (ds)DNA. Forms a right-handed helical filament on oriC DNA; dsDNA binds to the exterior of the filament while single-stranded (ss)DNA is stabiized in the filament's interior. The ATP-DnaA-oriC complex binds and stabilizes one strand of the AT-rich DNA unwinding element (DUE), permitting loading of DNA polymerase. After initiation quickly degrades to an ADP-DnaA complex that is not apt for DNA replication. Binds acidic phospholipids. This chain is Chromosomal replication initiator protein DnaA, found in Halalkalibacterium halodurans (strain ATCC BAA-125 / DSM 18197 / FERM 7344 / JCM 9153 / C-125) (Bacillus halodurans).